The sequence spans 226 residues: 3-dehydroquinate dehydratase (226 aa).

Residues Ser21, 42–44 (EVR), and Arg70 contribute to the 3-dehydroquinate site. Residue His124 is the Proton donor/acceptor of the active site. The active-site Schiff-base intermediate with substrate is Lys149. Residues Arg187, Thr206, and Gln210 each contribute to the 3-dehydroquinate site.

The protein belongs to the type-I 3-dehydroquinase family. In terms of assembly, homodimer.

It carries out the reaction 3-dehydroquinate = 3-dehydroshikimate + H2O. The protein operates within metabolic intermediate biosynthesis; chorismate biosynthesis; chorismate from D-erythrose 4-phosphate and phosphoenolpyruvate: step 3/7. Functionally, involved in the third step of the chorismate pathway, which leads to the biosynthesis of aromatic amino acids. Catalyzes the cis-dehydration of 3-dehydroquinate (DHQ) and introduces the first double bond of the aromatic ring to yield 3-dehydroshikimate. In Methanothrix thermoacetophila (strain DSM 6194 / JCM 14653 / NBRC 101360 / PT) (Methanosaeta thermophila), this protein is 3-dehydroquinate dehydratase.